Consider the following 334-residue polypeptide: UPF0104 membrane protein MTH_378 (334 aa).

The next 8 helical transmembrane spans lie at 7 to 27 (FYFF…MGPS), 33 to 53 (VYMA…GVLA), 120 to 140 (FFDL…VPVI), 142 to 162 (VIAL…YLVN), 218 to 238 (VIFI…YLVF), 247 to 267 (FSAV…SALP), 277 to 297 (MAGL…IALV), and 300 to 320 (IISF…YAGE).

Belongs to the UPF0104 family.

It is found in the cell membrane. The protein is UPF0104 membrane protein MTH_378 of Methanothermobacter thermautotrophicus (strain ATCC 29096 / DSM 1053 / JCM 10044 / NBRC 100330 / Delta H) (Methanobacterium thermoautotrophicum).